The chain runs to 436 residues: Probable D-serine dehydratase (436 aa).

Residue Lys111 is modified to N6-(pyridoxal phosphate)lysine.

It belongs to the serine/threonine dehydratase family. DsdA subfamily. Pyridoxal 5'-phosphate serves as cofactor.

The enzyme catalyses D-serine = pyruvate + NH4(+). This Lactiplantibacillus plantarum (strain ATCC BAA-793 / NCIMB 8826 / WCFS1) (Lactobacillus plantarum) protein is Probable D-serine dehydratase.